A 314-amino-acid polypeptide reads, in one-letter code: Olfactory receptor 10A6 (314 aa).

The Extracellular portion of the chain corresponds to 1–25; that stretch reads MERQNQSCVVEFILLGFSNYPELQG. Asn-5 carries N-linked (GlcNAc...) asparagine glycosylation. The helical transmembrane segment at 26–46 threads the bilayer; sequence QLFVAFLVIYLVTLIGNAIII. At 47–54 the chain is on the cytoplasmic side; it reads VIVSLDQS. A helical transmembrane segment spans residues 55-75; that stretch reads LHVPMYLFLLNLSVVDLSFSA. Topologically, residues 76–99 are extracellular; that stretch reads VIMPEMLVVLSTEKTTISFGGCFA. Cys-97 and Cys-189 are oxidised to a cystine. The helical transmembrane segment at 100–120 threads the bilayer; it reads QMYFILLFGGAECFLLGAMAY. Topologically, residues 121 to 139 are cytoplasmic; sequence DRFAAICHPLNYQMIMNKG. A helical transmembrane segment spans residues 140 to 160; it reads VFMKLIIFSWALGFMLGTVQT. At 161 to 197 the chain is on the extracellular side; the sequence is SWVSSFPFCGLNEINHISCETPAVLELACADTFLFEI. A helical membrane pass occupies residues 198-217; that stretch reads YAFTGTFLIILVPFLLILLS. Residues 218-237 lie on the Cytoplasmic side of the membrane; it reads YIRVLFAILKMPSTTGRQKA. A helical membrane pass occupies residues 238 to 258; that stretch reads FSTCAAHLTSVTLFYGTASMT. The Extracellular segment spans residues 259–271; sequence YLQPKSGYSPETK. The helical transmembrane segment at 272-292 threads the bilayer; sequence KVMSLSYSLLTPLLNLLIYSL. The Cytoplasmic segment spans residues 293–314; it reads RNSEMKRALMKLWRRRVVLHTI.

It belongs to the G-protein coupled receptor 1 family.

The protein localises to the cell membrane. Its function is as follows. Odorant receptor. The chain is Olfactory receptor 10A6 (OR10A6) from Homo sapiens (Human).